The chain runs to 211 residues: Large ribosomal subunit protein uL3 (211 aa).

The interval 122 to 156 (NQKRNNFGRGPMSHGSKNHRAPGSIGAGTTPGRVY) is disordered.

This sequence belongs to the universal ribosomal protein uL3 family. Part of the 50S ribosomal subunit. Forms a cluster with proteins L14 and L19.

Functionally, one of the primary rRNA binding proteins, it binds directly near the 3'-end of the 23S rRNA, where it nucleates assembly of the 50S subunit. The chain is Large ribosomal subunit protein uL3 from Nostoc sp. (strain PCC 7120 / SAG 25.82 / UTEX 2576).